Consider the following 536-residue polypeptide: Arylsulfatase K (536 aa).

Residues 1–24 (MIQKCIALSLFLFSALPEDNIVRA) form the signal peptide. Residues D42 and C82 each coordinate Ca(2+). The active-site Nucleophile is the C82. C82 is subject to 3-oxoalanine (Cys). Residue K130 participates in substrate binding. N-linked (GlcNAc...) asparagine glycosylation is present at N195. H253 lines the substrate pocket. N-linked (GlcNAc...) asparagine glycosylation occurs at N264. Ca(2+)-binding residues include D315 and H316. N-linked (GlcNAc...) asparagine glycans are attached at residues N377, N416, and N501.

The protein belongs to the sulfatase family. Ca(2+) serves as cofactor. Post-translationally, the conversion to 3-oxoalanine (also known as C-formylglycine, FGly), of a serine or cysteine residue in prokaryotes and of a cysteine residue in eukaryotes, is critical for catalytic activity.

It is found in the secreted. The protein localises to the lysosome. It carries out the reaction an aryl sulfate + H2O = a phenol + sulfate + H(+). The enzyme catalyses Hydrolysis of the 2-sulfate groups of the 2-O-sulfo-D-glucuronate residues of chondroitin sulfate, heparin and heparitin sulfate.. Catalyzes the hydrolysis of pseudosubstrates such as p-nitrocatechol sulfate and p-nitrophenyl sulfate. Catalyzes the hydrolysis of the 2-sulfate groups of the 2-O-sulfo-D-glucuronate residues of chondroitin sulfate, heparin and heparitin sulfate. Acts selectively on 2-sulfoglucuronate and lacks activity against 2-sulfoiduronate. This chain is Arylsulfatase K (arsk), found in Xenopus laevis (African clawed frog).